Reading from the N-terminus, the 394-residue chain is Putative pectate lyase 17 (394 aa).

The N-terminal stretch at methionine 1–alanine 22 is a signal peptide. Residues aspartate 192, aspartate 216, and aspartate 220 each coordinate Ca(2+). Arginine 272 is an active-site residue.

It belongs to the polysaccharide lyase 1 family. Requires Ca(2+) as cofactor.

The catalysed reaction is Eliminative cleavage of (1-&gt;4)-alpha-D-galacturonan to give oligosaccharides with 4-deoxy-alpha-D-galact-4-enuronosyl groups at their non-reducing ends.. It participates in glycan metabolism; pectin degradation; 2-dehydro-3-deoxy-D-gluconate from pectin: step 2/5. This chain is Putative pectate lyase 17, found in Arabidopsis thaliana (Mouse-ear cress).